Consider the following 317-residue polypeptide: MAIAIIAEYNPFHNGHIYQLEYTKKNFPNDKIYIILSGNFTQRGEISLADFKTKSKIALKYGADFIIKLPFEYATQAAHIFAKGAIKIVNQHKIDKIIFGSESNDVENLYKLANLWNQNQEAYNAFLKYALKLGYSFPKASAFALEEISGQKIVFPNDILGFEYIKQIVANNYPIRAYTLKRSEEFSLKNPEPNIASATYLRQLVNENKSISRFSPMKFIHPVCSLANLYPEFQKIVRETSAENLAKIWLISEGIENLFKKHINEPNFEKFLNAVNSRRYTNSRIKRAMVYILFRIEDPSQFDEEKIQLDCWKNQGF.

ATP-binding positions include 6–19 (IAEYNPFHNGHIYQ), Gly100, Asn157, and Arg182.

Belongs to the TmcAL family.

The protein localises to the cytoplasm. The catalysed reaction is cytidine(34) in elongator tRNA(Met) + acetate + ATP = N(4)-acetylcytidine(34) in elongator tRNA(Met) + AMP + diphosphate. Functionally, catalyzes the formation of N(4)-acetylcytidine (ac(4)C) at the wobble position of elongator tRNA(Met), using acetate and ATP as substrates. First activates an acetate ion to form acetyladenylate (Ac-AMP) and then transfers the acetyl group to tRNA to form ac(4)C34. The polypeptide is tRNA(Met) cytidine acetate ligase (Mesomycoplasma hyopneumoniae (strain 232) (Mycoplasma hyopneumoniae)).